A 966-amino-acid chain; its full sequence is Regulator of telomere elongation helicase 1 homolog (966 aa).

Residues 7 to 284 (AGIPVHFPFE…QDMAGDEPKD (278 aa)) enclose the Helicase ATP-binding domain. 42–49 (SPTGTGKT) is an ATP binding site. Positions 146, 164, 173, and 209 each coordinate [4Fe-4S] cluster. A DEAH box motif is present at residues 233 to 236 (DEAH). The segment at 844 to 864 (VKIHKRERSSPTAPESTSQVS) is disordered. The span at 853–863 (SPTAPESTSQV) shows a compositional bias: polar residues. A Phosphothreonine modification is found at threonine 855.

This sequence belongs to the helicase family. RAD3/XPD subfamily.

It is found in the nucleus. The enzyme catalyses ATP + H2O = ADP + phosphate + H(+). A probable ATP-dependent DNA helicase implicated in DNA repair and the maintenance of genomic stability. Acts as an anti-recombinase to counteract toxic recombination and limit crossover during meiosis. Regulates meiotic recombination and crossover homeostasis by physically dissociating strand invasion events and thereby promotes noncrossover repair by meiotic synthesis dependent strand annealing (SDSA) as well as disassembly of D loop recombination intermediates. The chain is Regulator of telomere elongation helicase 1 homolog from Drosophila sechellia (Fruit fly).